We begin with the raw amino-acid sequence, 249 residues long: Probable transcriptional regulatory protein A1S_1496 (249 aa).

This sequence belongs to the TACO1 family.

The protein localises to the cytoplasm. The polypeptide is Probable transcriptional regulatory protein A1S_1496 (Acinetobacter baumannii (strain ATCC 17978 / DSM 105126 / CIP 53.77 / LMG 1025 / NCDC KC755 / 5377)).